Here is a 207-residue protein sequence, read N- to C-terminus: Ribosomal RNA small subunit methyltransferase G (207 aa).

S-adenosyl-L-methionine-binding positions include Gly-76, Gln-81, 127 to 128 (VE), and Arg-141.

This sequence belongs to the methyltransferase superfamily. RNA methyltransferase RsmG family.

It is found in the cytoplasm. The enzyme catalyses guanosine(527) in 16S rRNA + S-adenosyl-L-methionine = N(7)-methylguanosine(527) in 16S rRNA + S-adenosyl-L-homocysteine. Specifically methylates the N7 position of guanine in position 527 of 16S rRNA. In Neisseria meningitidis serogroup A / serotype 4A (strain DSM 15465 / Z2491), this protein is Ribosomal RNA small subunit methyltransferase G.